The following is a 420-amino-acid chain: Tyrosine--tRNA ligase (420 aa).

Residue Tyr39 coordinates L-tyrosine. The 'HIGH' region signature appears at 44-53; it reads CTAPSLHIGS. Residues Tyr176 and Gln180 each coordinate L-tyrosine. Positions 236–240 match the 'KMSKS' region motif; that stretch reads KMGKT. An ATP-binding site is contributed by Lys239. The S4 RNA-binding domain occupies 349–414; it reads IPLIDLLYDT…AGKKRHIKIL (66 aa).

The protein belongs to the class-I aminoacyl-tRNA synthetase family. TyrS type 1 subfamily. As to quaternary structure, homodimer.

The protein resides in the cytoplasm. The catalysed reaction is tRNA(Tyr) + L-tyrosine + ATP = L-tyrosyl-tRNA(Tyr) + AMP + diphosphate + H(+). Functionally, catalyzes the attachment of tyrosine to tRNA(Tyr) in a two-step reaction: tyrosine is first activated by ATP to form Tyr-AMP and then transferred to the acceptor end of tRNA(Tyr). The chain is Tyrosine--tRNA ligase from Wolbachia pipientis subsp. Culex pipiens (strain wPip).